The sequence spans 319 residues: Small ribosomal subunit protein mS35 (319 aa).

The transit peptide at Met-1 to Asn-30 directs the protein to the mitochondrion.

This sequence belongs to the mitochondrion-specific ribosomal protein mS35 family. Component of the mitochondrial small ribosomal subunit (mt-SSU). Mature yeast 74S mitochondrial ribosomes consist of a small (37S) and a large (54S) subunit. The 37S small subunit contains a 15S ribosomal RNA (15S mt-rRNA) and 34 different proteins. The 54S large subunit contains a 21S rRNA (21S mt-rRNA) and 46 different proteins.

It localises to the mitochondrion. In terms of biological role, component of the mitochondrial ribosome (mitoribosome), a dedicated translation machinery responsible for the synthesis of mitochondrial genome-encoded proteins, including at least some of the essential transmembrane subunits of the mitochondrial respiratory chain. The mitoribosomes are attached to the mitochondrial inner membrane and translation products are cotranslationally integrated into the membrane. The polypeptide is Small ribosomal subunit protein mS35 (RSM24) (Saccharomyces cerevisiae (strain ATCC 204508 / S288c) (Baker's yeast)).